The chain runs to 341 residues: Heat-inducible transcription repressor HrcA (341 aa).

It belongs to the HrcA family.

Its function is as follows. Negative regulator of class I heat shock genes (grpE-dnaK-dnaJ and groELS operons). Prevents heat-shock induction of these operons. The chain is Heat-inducible transcription repressor HrcA from Symbiobacterium thermophilum (strain DSM 24528 / JCM 14929 / IAM 14863 / T).